Consider the following 378-residue polypeptide: Probable E3 ubiquitin-protein ligase LUL3 (378 aa).

Basic residues predominate over residues 1–21 (MGISLSKRRRDNNNNHHHPHH). The disordered stretch occupies residues 1-79 (MGISLSKRRR…PPSQISYRPY (79 aa)). A lipid anchor (N-myristoyl glycine) is attached at Gly2. Pro residues-rich tracts occupy residues 29 to 38 (DPPPQQPPPQ) and 55 to 72 (SLPP…PPPS). The interval 164–283 (FVFDALFDGS…GSFKVKVMKQ (120 aa)) is DAR2 domain. The RING-type; atypical zinc-finger motif lies at 321–360 (CVICLTEPKDTAVMPCRHLCLCSDCAEELRFQTNKCPICR).

Belongs to the RING-type zinc finger family. LOG2 subfamily. Post-translationally, myristoylated (in vitro).

The enzyme catalyses S-ubiquitinyl-[E2 ubiquitin-conjugating enzyme]-L-cysteine + [acceptor protein]-L-lysine = [E2 ubiquitin-conjugating enzyme]-L-cysteine + N(6)-ubiquitinyl-[acceptor protein]-L-lysine.. Its pathway is protein modification; protein ubiquitination. In terms of biological role, acts as an E3 ubiquitin-protein ligase, or as part of E3 complex, which accepts ubiquitin from specific E2 ubiquitin-conjugating enzymes and then transfers it to substrates (in vitro). This is Probable E3 ubiquitin-protein ligase LUL3 (LUL3) from Arabidopsis thaliana (Mouse-ear cress).